The chain runs to 141 residues: Large ribosomal subunit protein uL11 (141 aa).

It belongs to the universal ribosomal protein uL11 family. Part of the ribosomal stalk of the 50S ribosomal subunit. Interacts with L10 and the large rRNA to form the base of the stalk. L10 forms an elongated spine to which L12 dimers bind in a sequential fashion forming a multimeric L10(L12)X complex. Post-translationally, one or more lysine residues are methylated.

Forms part of the ribosomal stalk which helps the ribosome interact with GTP-bound translation factors. This Aliarcobacter butzleri (strain RM4018) (Arcobacter butzleri) protein is Large ribosomal subunit protein uL11.